The chain runs to 101 residues: DNA-binding protein Fis (101 aa).

Residues 77 to 96 (QTRAANMLGINRGTLRKKLK) constitute a DNA-binding region (H-T-H motif).

This sequence belongs to the transcriptional regulatory Fis family. As to quaternary structure, homodimer.

In terms of biological role, activates ribosomal RNA transcription. Plays a direct role in upstream activation of rRNA promoters. The protein is DNA-binding protein Fis of Shewanella amazonensis (strain ATCC BAA-1098 / SB2B).